The sequence spans 76 residues: uncharacterized protein (76 aa).

This is an uncharacterized protein from Sulfolobus islandicus rod-shaped virus 1 (SIRV-1).